Consider the following 470-residue polypeptide: UDP-N-acetylmuramate--L-alanine ligase (470 aa).

Residue 118 to 124 (GTHGKTT) coordinates ATP.

The protein belongs to the MurCDEF family.

The protein resides in the cytoplasm. The catalysed reaction is UDP-N-acetyl-alpha-D-muramate + L-alanine + ATP = UDP-N-acetyl-alpha-D-muramoyl-L-alanine + ADP + phosphate + H(+). It functions in the pathway cell wall biogenesis; peptidoglycan biosynthesis. Functionally, cell wall formation. This is UDP-N-acetylmuramate--L-alanine ligase from Cereibacter sphaeroides (strain ATCC 17025 / ATH 2.4.3) (Rhodobacter sphaeroides).